Consider the following 377-residue polypeptide: Cyclin-I (377 aa).

The interval D357–M377 is disordered. Pro residues predominate over residues P367 to M377.

It belongs to the cyclin family. Highest levels in adult heart, brain and skeletal muscle. Lower levels in adult placenta, lung, kidney and pancreas. Also high levels in fetal brain and lower levels in fetal lung, liver and kidney. Also abundant in testis and thyroid.

The protein resides in the nucleus membrane. The sequence is that of Cyclin-I from Homo sapiens (Human).